Reading from the N-terminus, the 61-residue chain is Small ribosomal subunit protein uS14 (61 aa).

The Zn(2+) site is built by Cys-24, Cys-27, Cys-40, and Cys-43.

It belongs to the universal ribosomal protein uS14 family. Zinc-binding uS14 subfamily. Part of the 30S ribosomal subunit. Contacts proteins S3 and S10. Zn(2+) is required as a cofactor.

Functionally, binds 16S rRNA, required for the assembly of 30S particles and may also be responsible for determining the conformation of the 16S rRNA at the A site. In Endomicrobium trichonymphae, this protein is Small ribosomal subunit protein uS14.